Reading from the N-terminus, the 488-residue chain is MIPVVALVGRPNVGKSTLFNRLTRTRDALVADFPGLTRDRKYGRAFLSGYEFIVVDTGGIDGTEEGIETHMAEQSLAAIEEADVVLFLTDARAGLTAADQAICEHLRRREKTTFVVANKVDGIDADSACAEFWALGLGEVYQMAAAQGRGVTNMIEYALAPYAEALGLNRDGDEDEDEEEREYSEEEAEAEQKRLQDLPIKMAIIGKPNVGKSTLTNRILGEERVVVYDSPGTTRDSIYIPMERDGREYVMIDTAGVRRRSKVHETVEKFSVIKTLKAVEDCNVVLLIIDAREGIAEQDLGLLGFALNAGRALVIAVNKWDGIDQDIKDRVKSELDRRLGFIDFARIHFISALHGTGVGHLFESVQEAYDSATRRVSTSMLTRIMQMAQDDHQPPLVNGRRVKLKYAHAGGYNPPIVVVHGNQVKKLPDSYKRFMMNYYRRSLKVMGTPIQIRFQDSANPFEGMNTKKLTVSQERRRKRMMTHIKDKK.

Residues 3–166 (PVVALVGRPN…YALAPYAEAL (164 aa)) enclose the EngA-type G 1 domain. Residues 9–16 (GRPNVGKS), 56–60 (DTGGI), and 118–121 (NKVD) contribute to the GTP site. The interval 168-191 (LNRDGDEDEDEEEREYSEEEAEAE) is disordered. Positions 172–189 (GDEDEDEEEREYSEEEAE) are enriched in acidic residues. The EngA-type G 2 domain occupies 200 to 373 (IKMAIIGKPN…SVQEAYDSAT (174 aa)). Residues 206-213 (GKPNVGKS), 253-257 (DTAGV), and 318-321 (NKWD) contribute to the GTP site. The KH-like domain maps to 374-458 (RRVSTSMLTR…PIQIRFQDSA (85 aa)).

The protein belongs to the TRAFAC class TrmE-Era-EngA-EngB-Septin-like GTPase superfamily. EngA (Der) GTPase family. In terms of assembly, associates with the 50S ribosomal subunit.

In terms of biological role, GTPase that plays an essential role in the late steps of ribosome biogenesis. The protein is GTPase Der of Shewanella sediminis (strain HAW-EB3).